Here is a 473-residue protein sequence, read N- to C-terminus: UDP-N-acetylmuramate--L-alanine ligase (473 aa).

123 to 129 (GTHGKTT) provides a ligand contact to ATP.

Belongs to the MurCDEF family.

It localises to the cytoplasm. The enzyme catalyses UDP-N-acetyl-alpha-D-muramate + L-alanine + ATP = UDP-N-acetyl-alpha-D-muramoyl-L-alanine + ADP + phosphate + H(+). It participates in cell wall biogenesis; peptidoglycan biosynthesis. In terms of biological role, cell wall formation. The protein is UDP-N-acetylmuramate--L-alanine ligase of Marinomonas sp. (strain MWYL1).